Reading from the N-terminus, the 306-residue chain is Non-specific ribonucleoside hydrolase RihC (306 aa).

Residue histidine 235 is part of the active site.

Belongs to the IUNH family. RihC subfamily.

Its function is as follows. Hydrolyzes both purine and pyrimidine ribonucleosides with a broad-substrate specificity. This is Non-specific ribonucleoside hydrolase RihC from Salmonella typhi.